A 417-amino-acid polypeptide reads, in one-letter code: Sterile alpha motif domain-containing protein 14 (417 aa).

Disordered regions lie at residues 37-299 (LLAK…WQEA) and 388-417 (AAAEKERKAQEKAARQREKLRRREQEAKKS). A compositionally biased stretch (basic residues) spans 40-49 (KGRRHRPSRS). 2 positions are modified to phosphoserine: Ser-84 and Ser-108. Low complexity predominate over residues 135-153 (AAASCSPPRSAPSSDSSPS). A compositionally biased stretch (basic and acidic residues) spans 160–173 (RAEPHSEDDSRDAS). Phosphoserine is present on residues Ser-173 and Ser-179. 2 stretches are compositionally biased toward low complexity: residues 244 to 260 (SGKGSASSGSTTSPTCS) and 276 to 295 (STLSDDSTPPSSSPKIPSGP). Position 279 is a phosphoserine (Ser-279). Position 283 is a phosphothreonine (Thr-283). In terms of domain architecture, SAM spans 326-389 (WTSQQVGQWL…KRKLKEMAAA (64 aa)). Residues 377–417 (ALVKRKLKEMAAAAEKERKAQEKAARQREKLRRREQEAKKS) are a coiled coil. Over residues 390 to 417 (AEKERKAQEKAARQREKLRRREQEAKKS) the composition is skewed to basic and acidic residues.

This Homo sapiens (Human) protein is Sterile alpha motif domain-containing protein 14 (SAMD14).